The sequence spans 610 residues: Glutamine--fructose-6-phosphate aminotransferase [isomerizing] (610 aa).

Cysteine 2 serves as the catalytic Nucleophile; for GATase activity. The Glutamine amidotransferase type-2 domain occupies 2 to 218; sequence CGIVGAVAQR…EGDVAEMTRR (217 aa). 2 consecutive SIS domains span residues 286–426 and 459–600; these read AAEI…QQQR and LAED…VDQP. The active-site For Fru-6P isomerization activity is the lysine 605.

In terms of assembly, homodimer.

The protein localises to the cytoplasm. The enzyme catalyses D-fructose 6-phosphate + L-glutamine = D-glucosamine 6-phosphate + L-glutamate. Functionally, catalyzes the first step in hexosamine metabolism, converting fructose-6P into glucosamine-6P using glutamine as a nitrogen source. This Vibrio cholerae serotype O1 (strain ATCC 39315 / El Tor Inaba N16961) protein is Glutamine--fructose-6-phosphate aminotransferase [isomerizing].